The following is an 81-amino-acid chain: Putative membrane protein insertion efficiency factor (81 aa).

A disordered region spans residues 61 to 81 (NDGGFDPVPPAPSSRTSSIAE).

Belongs to the UPF0161 family.

The protein localises to the cell inner membrane. Functionally, could be involved in insertion of integral membrane proteins into the membrane. In Pseudomonas entomophila (strain L48), this protein is Putative membrane protein insertion efficiency factor.